The sequence spans 511 residues: Histidine ammonia-lyase (511 aa).

The 5-imidazolinone (Ala-Gly) cross-link spans 142-144; it reads ASG. The residue at position 143 (serine 143) is a 2,3-didehydroalanine (Ser).

The protein belongs to the PAL/histidase family. In terms of processing, contains an active site 4-methylidene-imidazol-5-one (MIO), which is formed autocatalytically by cyclization and dehydration of residues Ala-Ser-Gly.

The protein resides in the cytoplasm. The enzyme catalyses L-histidine = trans-urocanate + NH4(+). It participates in amino-acid degradation; L-histidine degradation into L-glutamate; N-formimidoyl-L-glutamate from L-histidine: step 1/3. This chain is Histidine ammonia-lyase, found in Brucella ovis (strain ATCC 25840 / 63/290 / NCTC 10512).